A 26-amino-acid polypeptide reads, in one-letter code: AKGKNTKKFAAVVDEEGGAVTAXYXF.

This sequence belongs to the Tom7 family. As to quaternary structure, forms part of the preprotein translocase complex of the outer mitochondrial membrane (TOM complex).

The protein localises to the mitochondrion outer membrane. Its function is as follows. Seems to act as a modulator of the dynamics of the mitochondrial protein transport machinery. Seems to promote the dissociation of subunits of the outer membrane translocase. The chain is Mitochondrial import receptor subunit TOM7-2 (TOM7-2) from Solanum tuberosum (Potato).